Here is a 734-residue protein sequence, read N- to C-terminus: Photosystem I P700 chlorophyll a apoprotein A2 (734 aa).

8 helical membrane passes run 46–69 (IFASHFGHLAIIFLWTSGNLFHVA), 135–158 (LYAGALFLLVLAALCMFAGRLHLQ), 175–199 (LNHHLSGLFGLSSLAWCGHLIHVAI), 273–291 (IAHHHLAIAVIFIIAGHMY), 330–353 (LHFQLGLALACLGVLSSLTAQHLY), 369–395 (AALYTHHQYIAGFLMVGAFAHGAIFFV), 417–439 (AIISHLSWVSLFLGFHTLGLYVH), and 517–535 (FLVHHAIALGLHTTTLILV). Positions 559 and 568 each coordinate [4Fe-4S] cluster. Transmembrane regions (helical) follow at residues 575 to 596 (AFYLGVFWMLNTIGWTTFYWHW) and 643 to 665 (LSVWAWMFLFAHLVWATGFMFLI). Positions 654, 662, and 670 each coordinate chlorophyll a. Trp-671 provides a ligand contact to phylloquinone. A helical membrane pass occupies residues 707–727 (LVGLVHFSVGYVLTYAAFVIA).

It belongs to the PsaA/PsaB family. As to quaternary structure, the PsaA/B heterodimer binds the P700 chlorophyll special pair and subsequent electron acceptors. PSI consists of a core antenna complex that captures photons, and an electron transfer chain that converts photonic excitation into a charge separation. The eukaryotic PSI reaction center is composed of at least 11 subunits. P700 is a chlorophyll a/chlorophyll a' dimer, A0 is one or more chlorophyll a, A1 is one or both phylloquinones and FX is a shared 4Fe-4S iron-sulfur center. is required as a cofactor.

The protein localises to the plastid. It localises to the chloroplast thylakoid membrane. It carries out the reaction reduced [plastocyanin] + hnu + oxidized [2Fe-2S]-[ferredoxin] = oxidized [plastocyanin] + reduced [2Fe-2S]-[ferredoxin]. Its function is as follows. PsaA and PsaB bind P700, the primary electron donor of photosystem I (PSI), as well as the electron acceptors A0, A1 and FX. PSI is a plastocyanin/cytochrome c6-ferredoxin oxidoreductase, converting photonic excitation into a charge separation, which transfers an electron from the donor P700 chlorophyll pair to the spectroscopically characterized acceptors A0, A1, FX, FA and FB in turn. Oxidized P700 is reduced on the lumenal side of the thylakoid membrane by plastocyanin or cytochrome c6. This Cyanidium caldarium (Red alga) protein is Photosystem I P700 chlorophyll a apoprotein A2.